Reading from the N-terminus, the 550-residue chain is Hydroxylamine reductase (550 aa).

Cys-3, Cys-6, Cys-18, and Cys-25 together coordinate [2Fe-2S] cluster. His-249, Glu-273, Cys-317, Cys-405, Cys-433, Cys-458, Glu-492, and Lys-494 together coordinate hybrid [4Fe-2O-2S] cluster. Position 405 is a cysteine persulfide (Cys-405).

The protein belongs to the HCP family. Requires [2Fe-2S] cluster as cofactor. Hybrid [4Fe-2O-2S] cluster is required as a cofactor.

The protein resides in the cytoplasm. It carries out the reaction A + NH4(+) + H2O = hydroxylamine + AH2 + H(+). With respect to regulation, inhibited by oxygen. Activated by cyanide except in the prolonged presence of excess cyanide, where the enzyme is inactivated. Catalyzes the reduction of hydroxylamine to form NH(3) and H(2)O. Is also able to reduce hydroxylamine analogs such as methylhydroxylamine and hydroxyquinone. Might have a role as a scavenger of potentially toxic by-products of nitrate metabolism. In Escherichia coli (strain K12), this protein is Hydroxylamine reductase.